The sequence spans 497 residues: Signal recognition particle subunit SRP54 2 (497 aa).

Residues 1-297 are G-domain; sequence MVLAELGGRI…DAKPFVSRLL (297 aa). GTP contacts are provided by residues 108 to 117, 192 to 196, and 250 to 253; these read GLQGEVLEKP, DTSGR, and TKMD. Residues 298–497 form an M-domain region; the sequence is GNGDMSGFVN…LMGMFGGRDE (200 aa).

Belongs to the GTP-binding SRP family. SRP54 subfamily. As to quaternary structure, component of a signal recognition particle (SRP) complex that consists of a 7SL RNA molecule of 300 nucleotides and six protein subunits: SRP72, SRP68, SRP54, SRP19, SRP14 and SRP9.

It is found in the cytoplasm. It localises to the endoplasmic reticulum. It carries out the reaction GTP + H2O = GDP + phosphate + H(+). Functionally, component of the signal recognition particle (SRP) complex, a ribonucleoprotein complex that mediates the cotranslational targeting of secretory and membrane proteins to the endoplasmic reticulum (ER). As part of the SRP complex, associates with the SRP receptor (SR) component SRPRA to target secretory proteins to the endoplasmic reticulum membrane. Binds to the signal sequence of presecretory proteins when they emerge from the ribosomes. Displays basal GTPase activity, and stimulates reciprocal GTPase activation of the SR subunit SRPRA. Forms a guanosine 5'-triphosphate (GTP)-dependent complex with the SR subunit SRPRA. SR compaction and GTPase mediated rearrangement of SR drive SRP-mediated cotranslational protein translocation into the ER. Requires the presence of SRP9/SRP14 and/or SRP19 to stably interact with RNA. The chain is Signal recognition particle subunit SRP54 2 (SRP-54B) from Arabidopsis thaliana (Mouse-ear cress).